The sequence spans 316 residues: Acetaldehyde dehydrogenase (316 aa).

11-14 contributes to the NAD(+) binding site; that stretch reads SGNI. Cysteine 131 acts as the Acyl-thioester intermediate in catalysis. NAD(+) is bound by residues 162–170 and asparagine 289; that span reads SAGPGTRAN.

Belongs to the acetaldehyde dehydrogenase family. Interacts with MhpE.

The catalysed reaction is acetaldehyde + NAD(+) + CoA = acetyl-CoA + NADH + H(+). It participates in aromatic compound metabolism; 3-phenylpropanoate degradation. In terms of biological role, catalyzes the conversion of acetaldehyde to acetyl-CoA, using NAD(+) and coenzyme A. Is the final enzyme in the meta-cleavage pathway for the degradation of aromatic compounds. The polypeptide is Acetaldehyde dehydrogenase (Escherichia coli O157:H7).